A 152-amino-acid chain; its full sequence is Lipoprotein signal peptidase (152 aa).

The next 3 helical transmembrane spans lie at Val33–Leu53, Met58–Ile78, and Pro83–Asp102. Residues Asp111 and Asp125 contribute to the active site. Residues Val120–Leu140 form a helical membrane-spanning segment.

This sequence belongs to the peptidase A8 family.

It localises to the cell membrane. The enzyme catalyses Release of signal peptides from bacterial membrane prolipoproteins. Hydrolyzes -Xaa-Yaa-Zaa-|-(S,diacylglyceryl)Cys-, in which Xaa is hydrophobic (preferably Leu), and Yaa (Ala or Ser) and Zaa (Gly or Ala) have small, neutral side chains.. The protein operates within protein modification; lipoprotein biosynthesis (signal peptide cleavage). In terms of biological role, this protein specifically catalyzes the removal of signal peptides from prolipoproteins. The protein is Lipoprotein signal peptidase of Pelotomaculum thermopropionicum (strain DSM 13744 / JCM 10971 / SI).